Consider the following 1258-residue polypeptide: Cohesin subunit SA-1 (1258 aa).

A disordered region spans residues 1-59 (MITSELPVLQDSTNETTAHSDAGSELEETEVKGKRKRGRPGRPPSTNKKPRKSPGEKSR). Over residues 10–19 (QDSTNETTAH) the composition is skewed to polar residues. At S24 the chain carries Phosphoserine. The 86-residue stretch at 296-381 (FVHRYRDAIA…NRFKDRIVSM (86 aa)) folds into the SCD domain. S756, S1062, and S1065 each carry phosphoserine. Positions 1055–1148 (GGEDDRMSVN…EHGSEPDFLH (94 aa)) are disordered. Positions 1062–1075 (SVNSGSSSSKTSSV) are enriched in low complexity. The segment covering 1076 to 1087 (RSKKGRPPLHRK) has biased composition (basic residues). S1093 bears the Phosphoserine mark. Polar residues predominate over residues 1095 to 1106 (DNTWLNRTDTMI). Over residues 1137 to 1146 (ESEHGSEPDF) the composition is skewed to basic and acidic residues. A Glycyl lysine isopeptide (Lys-Gly) (interchain with G-Cter in SUMO2) cross-link involves residue K1161.

The protein belongs to the SCC3 family. In terms of assembly, cohesin complexes are composed of a heterodimer between a SMC1 protein (SMC1A or SMC1B) and SMC3, which are attached via their hinge domain, and RAD21 which link them at their heads, and one STAG protein (STAG1, STAG2 or STAG3). In cohesin complexes, STAG1 is mutually exclusive with STAG2 and STAG3. Interacts directly with RAD21 in cohesin complex. The cohesin complex interacts with the cohesin loading complex subunits NIPBL/Scc2 (via HEAT repeats) and MAU2/Scc4. NIPBL directly contacts all members of the complex, RAD21, SMC1A/B, SMC3 and STAG1. Post-translationally, phosphorylated by PLK1. The large dissociation of cohesin from chromosome arms during prophase is partly due to its phosphorylation.

It localises to the nucleus. It is found in the chromosome. Its function is as follows. Component of cohesin complex, a complex required for the cohesion of sister chromatids after DNA replication. The cohesin complex apparently forms a large proteinaceous ring within which sister chromatids can be trapped. At anaphase, the complex is cleaved and dissociates from chromatin, allowing sister chromatids to segregate. The cohesin complex may also play a role in spindle pole assembly during mitosis. The protein is Cohesin subunit SA-1 (Stag1) of Mus musculus (Mouse).